The chain runs to 252 residues: Coenzyme F420:L-glutamate ligase (252 aa).

GTP is bound by residues 12–15 (VPLE), 44–45 (HT), and Lys-49. Residue Asp-114 coordinates a divalent metal cation. Asn-117 contacts GTP. Positions 155, 156, and 213 each coordinate a divalent metal cation. 211 to 218 (MGQADEGT) contributes to the GTP binding site.

This sequence belongs to the CofE family. As to quaternary structure, homodimer. Mg(2+) serves as cofactor. Requires Mn(2+) as cofactor. The cofactor is K(+).

It catalyses the reaction oxidized coenzyme F420-0 + GTP + L-glutamate = oxidized coenzyme F420-1 + GDP + phosphate + H(+). The enzyme catalyses oxidized coenzyme F420-1 + GTP + L-glutamate = oxidized coenzyme F420-2 + GDP + phosphate + H(+). It participates in cofactor biosynthesis; coenzyme F420 biosynthesis. Catalyzes the GTP-dependent successive addition of two or more gamma-linked L-glutamates to the L-lactyl phosphodiester of 7,8-didemethyl-8-hydroxy-5-deazariboflavin (F420-0) to form coenzyme F420-0-glutamyl-glutamate (F420-2) or polyglutamated F420 derivatives. The sequence is that of Coenzyme F420:L-glutamate ligase from Methanopyrus kandleri (strain AV19 / DSM 6324 / JCM 9639 / NBRC 100938).